Here is a 557-residue protein sequence, read N- to C-terminus: Copine-4 (557 aa).

C2 domains are found at residues 3–131 (KMSN…SKSL) and 137–264 (TAGK…VQWE). Ca(2+) is bound by residues Asp170, Asp176, Asp232, Asp234, and Asp240. Positions 305 to 507 (QIQFTVAIDF…VLRDIVQFVP (203 aa)) constitute a VWFA domain.

Belongs to the copine family. As to quaternary structure, interacts (via VWFA domain) with ACTB, BCOR, BICD2, CCDC22, CDC42BPB, CEP162, MYCBP2, NONO, PDCD6, PITPNM2, RDX, SKIL, SKT, SPTBN1, UBE2O and WTAP. Requires Ca(2+) as cofactor.

Functionally, probable calcium-dependent phospholipid-binding protein that may play a role in calcium-mediated intracellular processes. The chain is Copine-4 from Mus musculus (Mouse).